We begin with the raw amino-acid sequence, 73 residues long: UPF0154 protein BcerKBAB4_3367 (73 aa).

A helical membrane pass occupies residues 4–24 (WLGILVGVVALVAGVALGFFI).

The protein belongs to the UPF0154 family.

It is found in the cell membrane. The protein is UPF0154 protein BcerKBAB4_3367 of Bacillus mycoides (strain KBAB4) (Bacillus weihenstephanensis).